Consider the following 366-residue polypeptide: Probable methyltransferase-like protein 24 (366 aa).

An N-terminal signal peptide occupies residues 1–29 (MARERPPGRGCGVLRRCLLGAVLLFGLRL). The segment at 36-110 (AGPGSPTRSA…GRPRRKGPRW (75 aa)) is disordered. Over residues 44-63 (SAPPGPAWRPPGPHLPPAPG) the composition is skewed to pro residues. Positions 91-100 (TPEPGCCAPR) are enriched in low complexity.

The protein belongs to the methyltransferase superfamily.

The protein localises to the secreted. Functionally, probable methyltransferase. This Homo sapiens (Human) protein is Probable methyltransferase-like protein 24 (METTL24).